Reading from the N-terminus, the 231-residue chain is Cytochrome c oxidase subunit 2 (231 aa).

Over 1-14 (MAHPAQLGLQNATS) the chain is Mitochondrial intermembrane. A helical membrane pass occupies residues 15-45 (PIMEELIAFHDHALMIIFLISSLVLYIISLM). Residues 46-59 (LTTKLTHTSTMNAQ) are Mitochondrial matrix-facing. A helical transmembrane segment spans residues 60–87 (EIEMVWTILPAIILIMIALPSLRILYMT). The Mitochondrial intermembrane portion of the chain corresponds to 88–231 (DEFNKPYLTL…WASYLYIVSL (144 aa)). His-161, Cys-196, Glu-198, Cys-200, His-204, and Met-207 together coordinate Cu cation. Glu-198 provides a ligand contact to Mg(2+).

Belongs to the cytochrome c oxidase subunit 2 family. In terms of assembly, component of the cytochrome c oxidase (complex IV, CIV), a multisubunit enzyme composed of 14 subunits. The complex is composed of a catalytic core of 3 subunits MT-CO1, MT-CO2 and MT-CO3, encoded in the mitochondrial DNA, and 11 supernumerary subunits COX4I, COX5A, COX5B, COX6A, COX6B, COX6C, COX7A, COX7B, COX7C, COX8 and NDUFA4, which are encoded in the nuclear genome. The complex exists as a monomer or a dimer and forms supercomplexes (SCs) in the inner mitochondrial membrane with NADH-ubiquinone oxidoreductase (complex I, CI) and ubiquinol-cytochrome c oxidoreductase (cytochrome b-c1 complex, complex III, CIII), resulting in different assemblies (supercomplex SCI(1)III(2)IV(1) and megacomplex MCI(2)III(2)IV(2)). Found in a complex with TMEM177, COA6, COX18, COX20, SCO1 and SCO2. Interacts with TMEM177 in a COX20-dependent manner. Interacts with COX20. Interacts with COX16. The cofactor is Cu cation.

It localises to the mitochondrion inner membrane. The catalysed reaction is 4 Fe(II)-[cytochrome c] + O2 + 8 H(+)(in) = 4 Fe(III)-[cytochrome c] + 2 H2O + 4 H(+)(out). Functionally, component of the cytochrome c oxidase, the last enzyme in the mitochondrial electron transport chain which drives oxidative phosphorylation. The respiratory chain contains 3 multisubunit complexes succinate dehydrogenase (complex II, CII), ubiquinol-cytochrome c oxidoreductase (cytochrome b-c1 complex, complex III, CIII) and cytochrome c oxidase (complex IV, CIV), that cooperate to transfer electrons derived from NADH and succinate to molecular oxygen, creating an electrochemical gradient over the inner membrane that drives transmembrane transport and the ATP synthase. Cytochrome c oxidase is the component of the respiratory chain that catalyzes the reduction of oxygen to water. Electrons originating from reduced cytochrome c in the intermembrane space (IMS) are transferred via the dinuclear copper A center (CU(A)) of subunit 2 and heme A of subunit 1 to the active site in subunit 1, a binuclear center (BNC) formed by heme A3 and copper B (CU(B)). The BNC reduces molecular oxygen to 2 water molecules using 4 electrons from cytochrome c in the IMS and 4 protons from the mitochondrial matrix. The chain is Cytochrome c oxidase subunit 2 (MT-CO2) from Lagothrix lagotricha (Brown woolly monkey).